Reading from the N-terminus, the 215-residue chain is Probable transaldolase (215 aa).

The active-site Schiff-base intermediate with substrate is lysine 83.

The protein belongs to the transaldolase family. Type 3B subfamily.

Its subcellular location is the cytoplasm. The enzyme catalyses D-sedoheptulose 7-phosphate + D-glyceraldehyde 3-phosphate = D-erythrose 4-phosphate + beta-D-fructose 6-phosphate. It participates in carbohydrate degradation; pentose phosphate pathway; D-glyceraldehyde 3-phosphate and beta-D-fructose 6-phosphate from D-ribose 5-phosphate and D-xylulose 5-phosphate (non-oxidative stage): step 2/3. In terms of biological role, transaldolase is important for the balance of metabolites in the pentose-phosphate pathway. The chain is Probable transaldolase from Desulforudis audaxviator (strain MP104C).